Reading from the N-terminus, the 290-residue chain is MKIAVYGKGGIGKSTTSCNISIALARRGKRVLQIGCDPKHDSTFTLTGFLIPTIIDTLQSKDYHYEDVWPEDVIYKGYGGVDCVEAGGPPAGAGCGGYVVGETVKLLKELNAFYEYDVILFDVLGDVVCGGFAAPLNYADYCIIITDNGFDALFAANRIAASVREKARTHPLRLAGLVGNRTSKRDLIDKYVEACPMPVLEVLPLIEDIRVSRVKGKTLFEMAESEPSLNYVCEFYLNIADQILSQPEGVVPKEVPDRELFSLLSDFYLNPSSSRSDMQLEDNSLDFVMV.

Residues 10-15 and lysine 39 contribute to the ATP site; that span reads GIGKST. Mg(2+) is bound at residue serine 14. [4Fe-4S] cluster contacts are provided by cysteine 95 and cysteine 129. 180 to 181 contacts ATP; the sequence is NR.

This sequence belongs to the NifH/BchL/ChlL family. As to quaternary structure, homodimer. Protochlorophyllide reductase is composed of three subunits; ChlL, ChlN and ChlB. Requires [4Fe-4S] cluster as cofactor.

It is found in the plastid. It localises to the chloroplast. It catalyses the reaction chlorophyllide a + oxidized 2[4Fe-4S]-[ferredoxin] + 2 ADP + 2 phosphate = protochlorophyllide a + reduced 2[4Fe-4S]-[ferredoxin] + 2 ATP + 2 H2O. Its pathway is porphyrin-containing compound metabolism; chlorophyll biosynthesis (light-independent). In terms of biological role, component of the dark-operative protochlorophyllide reductase (DPOR) that uses Mg-ATP and reduced ferredoxin to reduce ring D of protochlorophyllide (Pchlide) to form chlorophyllide a (Chlide). This reaction is light-independent. The L component serves as a unique electron donor to the NB-component of the complex, and binds Mg-ATP. This Zygnema circumcarinatum (Green alga) protein is Light-independent protochlorophyllide reductase iron-sulfur ATP-binding protein.